Here is a 580-residue protein sequence, read N- to C-terminus: Tripeptidyl-peptidase sed5 (580 aa).

The interval 1–21 (MYPLDGSARPHPPGTTRLNSV) is disordered. The Peptidase S53 domain maps to 181–567 (RAQRLIVAEL…RRTLEELRRI (387 aa)). A glycan (N-linked (GlcNAc...) asparagine) is linked at asparagine 236. Residues glutamate 269, aspartate 273, and serine 479 each act as charge relay system in the active site. The Ca(2+) site is built by aspartate 523 and isoleucine 524. N-linked (GlcNAc...) asparagine glycosylation occurs at asparagine 529. 3 residues coordinate Ca(2+): glycine 543, glycine 545, and aspartate 547.

Ca(2+) serves as cofactor.

Its subcellular location is the secreted. The protein resides in the extracellular space. The enzyme catalyses Release of an N-terminal tripeptide from a polypeptide.. Functionally, secreted tripeptidyl-peptidase which degrades proteins at acidic pHs and is involved in virulence. The chain is Tripeptidyl-peptidase sed5 (sed5) from Aspergillus fumigatus (strain ATCC MYA-4609 / CBS 101355 / FGSC A1100 / Af293) (Neosartorya fumigata).